The chain runs to 101 residues: Iron-sulfur cluster assembly protein CyaY (101 aa).

Belongs to the frataxin family.

Functionally, involved in iron-sulfur (Fe-S) cluster assembly. May act as a regulator of Fe-S biogenesis. This chain is Iron-sulfur cluster assembly protein CyaY, found in Haemophilus influenzae (strain 86-028NP).